Reading from the N-terminus, the 319-residue chain is Chromoplast-specific carotenoid-associated protein C2, chromoplastic (319 aa).

Residues 1–55 (MTSIAFCNAFTVNPFLAAARRSPPPLTPLTSVALSPARKPRILAIFHPRTFPSFR) constitute a chromoplast transit peptide.

The protein belongs to the PAP/fibrillin family.

Its subcellular location is the plastid. It is found in the chromoplast. May be involved in carotenoid sequestration within chromoplasts. The protein is Chromoplast-specific carotenoid-associated protein C2, chromoplastic (CHRC2) of Oncidium hybrid cultivar (Orchid).